The sequence spans 1118 residues: uncharacterized protein (1118 aa).

3 disordered regions span residues 1–69 (MESG…NGED), 1044–1071 (PKSV…EKID), and 1090–1118 (IRPT…SFEL). The segment covering 13–34 (DMVEEDNDEDSFEEPACEDSFD) has biased composition (acidic residues). A compositionally biased stretch (polar residues) spans 35–60 (SQEASSKANEPQNDSFDEPIQSSVSK). Positions 1107–1118 (EDSDDLEDSFEL) are enriched in acidic residues.

This is an uncharacterized protein from Caenorhabditis elegans.